The chain runs to 368 residues: MADFVNASIFGTLFQITSRYVNLEPVGMGAFGLVCSAKDQLTSSPVAIKKIMKPFSTPVLSKRTYRELKLLKHIRHENIISLSDIFISPSEDIYFVTELLGTDLHRLLTARPLEKQFIQYFLYQILRGLKYVHSAGVVHRDLKPSNILVNENCDLKICDFGLARIQDPQMTGYVSTRYYRAPEIMLTWQKYDVAVDIWSTGCIFAEMLEGKPLFPGKDHVNQFSIITELLGTPPDDVIQTICSENTLRFVQSLPKKPRIPFNEKFKTNDPLALDLVEKMLSFDPRTRITASQALAHPYLAPYHDPNDEPVAAEQFDWSFNDADLPIDTWKVMMYSEILDFHHISQDGDQFLNANGPGTEQASDSSFTV.

Residues 20 to 299 enclose the Protein kinase domain; that stretch reads YVNLEPVGMG…ASQALAHPYL (280 aa). ATP is bound by residues 26-34 and lysine 49; that span reads VGMGAFGLV. The Proton acceptor role is filled by aspartate 141. Phosphothreonine is present on threonine 171. Positions 171–173 match the TXY motif; it reads TGY. Tyrosine 173 is modified (phosphotyrosine).

It belongs to the protein kinase superfamily. Ser/Thr protein kinase family. MAP kinase subfamily. HOG1 sub-subfamily. It depends on Mg(2+) as a cofactor. Post-translationally, phosphorylated. Dually phosphorylated on Thr-171 and Tyr-173, which activates the enzyme. Rapidly dephosphorylated upon either hypo- or hyperosmotic shock.

The protein resides in the cytoplasm. It is found in the nucleus. The enzyme catalyses L-seryl-[protein] + ATP = O-phospho-L-seryl-[protein] + ADP + H(+). It carries out the reaction L-threonyl-[protein] + ATP = O-phospho-L-threonyl-[protein] + ADP + H(+). Its activity is regulated as follows. Activated by tyrosine and threonine phosphorylation. Functionally, mitogen-activated protein kinase involved in a signal transduction pathway that is activated by changes in the osmolarity of the extracellular environment. Controls osmotic regulation of transcription of target genes. The polypeptide is Mitogen-activated protein kinase HOG1B (HOG1B) (Wallemia ichthyophaga (strain EXF-994 / CBS 113033)).